Here is a 433-residue protein sequence, read N- to C-terminus: 3-phosphoshikimate 1-carboxyvinyltransferase (433 aa).

K15, S16, and R20 together coordinate 3-phosphoshikimate. K15 contacts phosphoenolpyruvate. Phosphoenolpyruvate-binding residues include G96 and R124. 3-phosphoshikimate is bound by residues S169, Q171, S195, D318, and K345. Q171 serves as a coordination point for phosphoenolpyruvate. D318 functions as the Proton acceptor in the catalytic mechanism. Phosphoenolpyruvate contacts are provided by R349 and R393.

Belongs to the EPSP synthase family. Monomer.

The protein localises to the cytoplasm. The enzyme catalyses 3-phosphoshikimate + phosphoenolpyruvate = 5-O-(1-carboxyvinyl)-3-phosphoshikimate + phosphate. Its pathway is metabolic intermediate biosynthesis; chorismate biosynthesis; chorismate from D-erythrose 4-phosphate and phosphoenolpyruvate: step 6/7. Functionally, catalyzes the transfer of the enolpyruvyl moiety of phosphoenolpyruvate (PEP) to the 5-hydroxyl of shikimate-3-phosphate (S3P) to produce enolpyruvyl shikimate-3-phosphate and inorganic phosphate. In Pelodictyon phaeoclathratiforme (strain DSM 5477 / BU-1), this protein is 3-phosphoshikimate 1-carboxyvinyltransferase.